The chain runs to 549 residues: Glucose-6-phosphate isomerase (549 aa).

An N6-acetyllysine mark is found at Lys80, Lys228, and Lys234. Residue Glu355 is the Proton donor of the active site. Catalysis depends on residues His386 and Lys514.

It belongs to the GPI family.

Its subcellular location is the cytoplasm. The catalysed reaction is alpha-D-glucose 6-phosphate = beta-D-fructose 6-phosphate. It functions in the pathway carbohydrate biosynthesis; gluconeogenesis. The protein operates within carbohydrate degradation; glycolysis; D-glyceraldehyde 3-phosphate and glycerone phosphate from D-glucose: step 2/4. In terms of biological role, catalyzes the reversible isomerization of glucose-6-phosphate to fructose-6-phosphate. This is Glucose-6-phosphate isomerase from Escherichia coli O127:H6 (strain E2348/69 / EPEC).